Consider the following 234-residue polypeptide: MGEKEEVKLLGVWYSPYAIRPKIALRLKSVDYDYVEENLFGSKSELLLKSNPVHKKVPVLLHNNKPIVESLNIVEYIDETWNSSAPSILPSHPYDRALARFWSDFVDNKWFPALRMAAITKSEDAKAKAMEEVEEGLLQLEDAFVSISKGKPFFGGEAIGFMDICFGSFVVLLKAREKFKAEKLLDESKTPSLCKWADRFLSDETVKNVAPEIEKVAEFLQELEVRAQSAASRS.

The GST N-terminal domain occupies 5–85 (EEVKLLGVWY…YIDETWNSSA (81 aa)). Glutathione contacts are provided by residues 15 to 16 (SP), 42 to 43 (SK), 56 to 57 (KV), and 69 to 70 (ES). One can recognise a GST C-terminal domain in the interval 92 to 219 (HPYDRALARF…APEIEKVAEF (128 aa)).

The protein belongs to the GST superfamily. Tau family.

The protein localises to the cytoplasm. It localises to the cytosol. It catalyses the reaction RX + glutathione = an S-substituted glutathione + a halide anion + H(+). May be involved in the conjugation of reduced glutathione to a wide number of exogenous and endogenous hydrophobic electrophiles and have a detoxification role against certain herbicides. The sequence is that of Glutathione S-transferase U16 (GSTU16) from Arabidopsis thaliana (Mouse-ear cress).